The sequence spans 328 residues: MLLSSSMPLNLGKRIFGYNSYLLTDIIIYHIVINNKWIQYFLGIRLIKAYVPCEKCSYEKVAEYENFKITHNLFDADVCIDDPVLFLKRIKGLEDEVTCLLWGDTVYDALYYKNEMAKYDNVIMASYWNYQMFEKLGYKIKGVMKRHIKPIFVGEKKDKIFVTLGESRYFDRKNLTLIDKITREFGVRDKTIIIGNLGNPDYPTFQLSEEEKYRLYARSKFFLALSKSEGFGIPPIEAMALGVVPIYLDAHGYKENLVGIPIDPIDEYTYCVDNKHCFRVWDLSIHELRYEINHALTIGKDEYEDLSEKAKNKARGYIIATMESSDFR.

This sequence belongs to the glycosyltransferase group 1 family. Glycosyltransferase 4 subfamily.

This is Putative glycosyltransferase 41 (SIFV0041) from Sulfolobus islandicus filamentous virus (isolate Iceland/Hveragerdi) (SIFV).